The following is a 229-amino-acid chain: 2-C-methyl-D-erythritol 4-phosphate cytidylyltransferase (229 aa).

This sequence belongs to the IspD/TarI cytidylyltransferase family. IspD subfamily.

It catalyses the reaction 2-C-methyl-D-erythritol 4-phosphate + CTP + H(+) = 4-CDP-2-C-methyl-D-erythritol + diphosphate. The protein operates within isoprenoid biosynthesis; isopentenyl diphosphate biosynthesis via DXP pathway; isopentenyl diphosphate from 1-deoxy-D-xylulose 5-phosphate: step 2/6. Its function is as follows. Catalyzes the formation of 4-diphosphocytidyl-2-C-methyl-D-erythritol from CTP and 2-C-methyl-D-erythritol 4-phosphate (MEP). This Clostridium botulinum (strain Langeland / NCTC 10281 / Type F) protein is 2-C-methyl-D-erythritol 4-phosphate cytidylyltransferase.